The primary structure comprises 92 residues: Small ribosomal subunit protein uS19 (92 aa).

Belongs to the universal ribosomal protein uS19 family.

Functionally, protein S19 forms a complex with S13 that binds strongly to the 16S ribosomal RNA. In Methylorubrum extorquens (strain CM4 / NCIMB 13688) (Methylobacterium extorquens), this protein is Small ribosomal subunit protein uS19.